The following is a 931-amino-acid chain: Dymeclin (931 aa).

3 disordered regions span residues 1 to 53 (MGVA…SSTT), 599 to 618 (SPSK…NTNN), and 839 to 931 (DANN…EKTN). Residue G2 is the site of N-myristoyl glycine attachment. Low complexity-rich tracts occupy residues 27–49 (NNNK…NNNN) and 601–618 (SKIN…NTNN). Residues 839 to 858 (DANNFTPKKQLSSDQLHSPP) show a composition bias toward polar residues. 2 stretches are compositionally biased toward low complexity: residues 859–876 (TNTT…SSNT) and 889–901 (QLQQ…NQEQ). A compositionally biased stretch (polar residues) spans 919–931 (TTGVELSSTEKTN).

It belongs to the dymeclin family.

The chain is Dymeclin (dym) from Dictyostelium discoideum (Social amoeba).